The primary structure comprises 606 residues: Putative helicase 172L (606 aa).

Positions 59–264 (GEKTWGVRGG…WAQLRFCGYK (206 aa)) constitute a Helicase ATP-binding domain. 72-79 (LCMGLGKT) is an ATP binding site. Residues 437–586 (YIKSSNFEIS…ASYLEGKERI (150 aa)) form the Helicase C-terminal domain.

Belongs to the SNF2/RAD54 helicase family.

This is Putative helicase 172L from Invertebrate iridescent virus 6 (IIV-6).